The primary structure comprises 438 residues: Xylose isomerase (438 aa).

Catalysis depends on residues H103 and D106. Mg(2+)-binding residues include E234, E270, H273, D298, D309, D311, and D341.

This sequence belongs to the xylose isomerase family. In terms of assembly, homotetramer. The cofactor is Mg(2+).

The protein localises to the cytoplasm. The enzyme catalyses alpha-D-xylose = alpha-D-xylulofuranose. In Phocaeicola vulgatus (strain ATCC 8482 / DSM 1447 / JCM 5826 / CCUG 4940 / NBRC 14291 / NCTC 11154) (Bacteroides vulgatus), this protein is Xylose isomerase.